The chain runs to 183 residues: Ribosome maturation factor RimM (183 aa).

The PRC barrel domain occupies 96 to 171 (PDEFYDHELE…VALIDPPEGL (76 aa)).

Belongs to the RimM family. In terms of assembly, binds ribosomal protein uS19.

The protein localises to the cytoplasm. Functionally, an accessory protein needed during the final step in the assembly of 30S ribosomal subunit, possibly for assembly of the head region. Essential for efficient processing of 16S rRNA. May be needed both before and after RbfA during the maturation of 16S rRNA. It has affinity for free ribosomal 30S subunits but not for 70S ribosomes. The chain is Ribosome maturation factor RimM from Rhodococcus jostii (strain RHA1).